The chain runs to 138 residues: ATP synthase epsilon chain (138 aa).

It belongs to the ATPase epsilon chain family. As to quaternary structure, F-type ATPases have 2 components, CF(1) - the catalytic core - and CF(0) - the membrane proton channel. CF(1) has five subunits: alpha(3), beta(3), gamma(1), delta(1), epsilon(1). CF(0) has three main subunits: a, b and c.

The protein resides in the cell membrane. Produces ATP from ADP in the presence of a proton gradient across the membrane. The sequence is that of ATP synthase epsilon chain from Streptococcus pyogenes serotype M3 (strain ATCC BAA-595 / MGAS315).